The primary structure comprises 270 residues: tRNA pseudouridine synthase A (270 aa).

D52 acts as the Nucleophile in catalysis. Y110 contributes to the substrate binding site.

Belongs to the tRNA pseudouridine synthase TruA family. In terms of assembly, homodimer.

The catalysed reaction is uridine(38/39/40) in tRNA = pseudouridine(38/39/40) in tRNA. In terms of biological role, formation of pseudouridine at positions 38, 39 and 40 in the anticodon stem and loop of transfer RNAs. This is tRNA pseudouridine synthase A from Roseiflexus castenholzii (strain DSM 13941 / HLO8).